The sequence spans 363 residues: Molybdenum import ATP-binding protein ModC (363 aa).

Positions 1 to 232 (MLDLDLRRRQ…PGLRPLTGRY (232 aa)) constitute an ABC transporter domain. An ATP-binding site is contributed by 30 to 37 (GRSGSGKT). A Mop domain is found at 292–358 (RVSIRNVLPA…IKALTIARGD (67 aa)).

The protein belongs to the ABC transporter superfamily. Molybdate importer (TC 3.A.1.8) family. In terms of assembly, the complex is composed of two ATP-binding proteins (ModC), two transmembrane proteins (ModB) and a solute-binding protein (ModA).

It is found in the cell inner membrane. It carries out the reaction molybdate(out) + ATP + H2O = molybdate(in) + ADP + phosphate + H(+). Its function is as follows. Part of the ABC transporter complex ModABC involved in molybdenum import. Responsible for energy coupling to the transport system. In Paramagnetospirillum magneticum (strain ATCC 700264 / AMB-1) (Magnetospirillum magneticum), this protein is Molybdenum import ATP-binding protein ModC.